The following is a 312-amino-acid chain: Pantothenate kinase (312 aa).

97-104 is an ATP binding site; the sequence is GSVAVGKS.

The protein belongs to the prokaryotic pantothenate kinase family.

It localises to the cytoplasm. The enzyme catalyses (R)-pantothenate + ATP = (R)-4'-phosphopantothenate + ADP + H(+). It functions in the pathway cofactor biosynthesis; coenzyme A biosynthesis; CoA from (R)-pantothenate: step 1/5. The protein is Pantothenate kinase of Mycobacterium bovis (strain BCG / Pasteur 1173P2).